Consider the following 256-residue polypeptide: Acetylglutamate kinase (256 aa).

Residues 40–41, Arg62, and Asn154 contribute to the substrate site; that span reads GG.

This sequence belongs to the acetylglutamate kinase family. ArgB subfamily.

Its subcellular location is the cytoplasm. It carries out the reaction N-acetyl-L-glutamate + ATP = N-acetyl-L-glutamyl 5-phosphate + ADP. The protein operates within amino-acid biosynthesis; L-arginine biosynthesis; N(2)-acetyl-L-ornithine from L-glutamate: step 2/4. Its function is as follows. Catalyzes the ATP-dependent phosphorylation of N-acetyl-L-glutamate. The chain is Acetylglutamate kinase from Staphylococcus aureus (strain bovine RF122 / ET3-1).